The sequence spans 262 residues: Homeobox-leucine zipper protein HOX24 (262 aa).

2 disordered regions span residues 44–68 and 162–189; these read AAGR…RKRR and LNER…NSVM. Gly residues predominate over residues 46 to 62; sequence GRGGGDGDGGGGGGGGG. The homeobox DNA-binding region spans 61–122; that stretch reads GGGERKRRFT…NKRARWRSKQ (62 aa). Residues 121–165 are leucine-zipper; it reads KQIEHDYAALRAQYDALHARVESLRQEKLALAAQVDELRGKLNER.

The protein belongs to the HD-ZIP homeobox family. Class I subfamily. As to expression, expressed in roots and panicles.

It localises to the nucleus. Functionally, probable transcription factor. The polypeptide is Homeobox-leucine zipper protein HOX24 (HOX24) (Oryza sativa subsp. indica (Rice)).